We begin with the raw amino-acid sequence, 480 residues long: G-rich sequence factor 1 (480 aa).

Residues 1–117 (MAGTRWVLGA…AAAAVPTRSY (117 aa)) constitute a mitochondrion transit peptide. 2 RRM domains span residues 122-246 (KTTY…SSPV) and 250-326 (GVVR…PSRR). At serine 244 the chain carries Phosphoserine. Residue serine 335 is modified to Phosphoserine. The RRM 3 domain occupies 401–480 (HFVHMRGLPF…LFLNSCPKGK (80 aa)).

Monomer. Found in a complex with DDX28, DHX30, FASTKD2 and FASTKD5. Interacts with the mitochondrial RNase P complex subunit TRMT10C/MRPP1. Interacts with the 2 components of the mitochondrial degradosome complex, PNPT1 and SUPV3L1, in an RNA-dependent manner.

Its subcellular location is the mitochondrion matrix. The protein localises to the cytoplasm. Its function is as follows. Regulator of post-transcriptional mitochondrial gene expression, required for assembly of the mitochondrial ribosome and for recruitment of mRNA and lncRNA. Binds RNAs containing the 14 base G-rich element. Preferentially binds RNAs transcribed from three contiguous genes on the light strand of mtDNA, the ND6 mRNA, and the long non-coding RNAs for MT-CYB and MT-ND5, each of which contains multiple consensus binding sequences. Involved in the degradosome-mediated decay of non-coding mitochondrial transcripts (MT-ncRNA) and tRNA-like molecules. Acts by unwinding G-quadruplex RNA structures in MT-ncRNA, thus facilitating their degradation by the degradosome. G-quadruplexes (G4) are non-canonical 4 stranded structures formed by transcripts from the light strand of mtDNA. This is G-rich sequence factor 1 (GRSF1) from Homo sapiens (Human).